A 246-amino-acid chain; its full sequence is Phosphate import ATP-binding protein PstB (246 aa).

The 239-residue stretch at 3 to 241 (AKTTNLNLFY…PKQEKTKAYL (239 aa)) folds into the ABC transporter domain. Position 35–42 (35–42 (GASGCGKS)) interacts with ATP.

This sequence belongs to the ABC transporter superfamily. Phosphate importer (TC 3.A.1.7) family. As to quaternary structure, the complex is composed of two ATP-binding proteins (PstB), two transmembrane proteins (PstC and PstA) and a solute-binding protein (PstS).

It is found in the cell inner membrane. It catalyses the reaction phosphate(out) + ATP + H2O = ADP + 2 phosphate(in) + H(+). Functionally, part of the ABC transporter complex PstSACB involved in phosphate import. Responsible for energy coupling to the transport system. The chain is Phosphate import ATP-binding protein PstB from Campylobacter jejuni subsp. jejuni serotype O:2 (strain ATCC 700819 / NCTC 11168).